An 88-amino-acid polypeptide reads, in one-letter code: uncharacterized protein (88 aa).

Residues Ala1–Glu54 form a disordered region. The segment covering Gly16–Pro53 has biased composition (acidic residues).

As to expression, predominantly in developing fruit.

This is an uncharacterized protein from Fragaria ananassa (Strawberry).